The following is a 109-amino-acid chain: MAAGVVFLALSAQLLQARLMKEESPVVSWRLEPEDGTALDVHFVSTLEPLSNAVKRNVPRCIIILVLQEPTAFRISVTSSCFVQNTLTKLLKDRRKMQTVQCATARETS.

A signal peptide spans 1–17 (MAAGVVFLALSAQLLQA).

The protein belongs to the BAGE family. As to expression, not expressed in normal tissues except in testis. Expressed in 22% of melanomas, in bladder and lung carcinomas.

The protein localises to the secreted. Functionally, unknown. Candidate gene encoding tumor antigens. The chain is B melanoma antigen 2 (BAGE2) from Homo sapiens (Human).